We begin with the raw amino-acid sequence, 379 residues long: tRNA-specific 2-thiouridylase MnmA (379 aa).

Residues 6-13 and L32 each bind ATP; that span reads AMSGGVDS. The active-site Nucleophile is the C101. An intrachain disulfide couples C101 to C199. An ATP-binding site is contributed by G125. Positions 148–150 are interaction with tRNA; it reads KDQ. C199 serves as the catalytic Cysteine persulfide intermediate.

This sequence belongs to the MnmA/TRMU family.

Its subcellular location is the cytoplasm. It catalyses the reaction S-sulfanyl-L-cysteinyl-[protein] + uridine(34) in tRNA + AH2 + ATP = 2-thiouridine(34) in tRNA + L-cysteinyl-[protein] + A + AMP + diphosphate + H(+). Catalyzes the 2-thiolation of uridine at the wobble position (U34) of tRNA, leading to the formation of s(2)U34. This is tRNA-specific 2-thiouridylase MnmA from Paenarthrobacter aurescens (strain TC1).